The following is a 190-amino-acid chain: Adenine phosphoribosyltransferase (190 aa).

The protein belongs to the purine/pyrimidine phosphoribosyltransferase family. As to quaternary structure, homodimer.

The protein localises to the cytoplasm. The catalysed reaction is AMP + diphosphate = 5-phospho-alpha-D-ribose 1-diphosphate + adenine. It functions in the pathway purine metabolism; AMP biosynthesis via salvage pathway; AMP from adenine: step 1/1. In terms of biological role, catalyzes a salvage reaction resulting in the formation of AMP, that is energically less costly than de novo synthesis. This Cupriavidus necator (strain ATCC 17699 / DSM 428 / KCTC 22496 / NCIMB 10442 / H16 / Stanier 337) (Ralstonia eutropha) protein is Adenine phosphoribosyltransferase.